Reading from the N-terminus, the 1546-residue chain is Lysophospholipase NTE1 (1546 aa).

Residues 1-45 are Cytoplasmic-facing; the sequence is MKDSTEALNSIAFAVDTTLSSILPSSLAPPSAPPATSSFLKSIWY. A helical membrane pass occupies residues 46–66; sequence AFWWLWSMVVFKIMNIILLYI. The Lumenal segment spans residues 67–81; the sequence is PSKIMNALSINFEIT. The chain crosses the membrane as a helical span at residues 82–102; it reads LNLSSILVALSAIITVCFLVV. Residues 103-1546 lie on the Cytoplasmic side of the membrane; sequence RYKYLTGYSK…KKVLYRRNSI (1444 aa). Residues 689-820 and 816-965 contribute to the a nucleoside 3',5'-cyclic phosphate site; these read PTEF…LKKL and KLKK…VASK. The 165-residue stretch at 1239-1403 folds into the PNPLA domain; that stretch reads LVLGGGGSRG…LDNLPVSEMK (165 aa). The GXGXXG signature appears at 1243 to 1248; it reads GGGSRG. Positions 1270–1274 match the GXSXG motif; the sequence is GTSIG. The Nucleophile role is filled by Ser1272. The active-site Proton acceptor is the Asp1390. The short motif at 1390 to 1392 is the DGA/G element; the sequence is DGG.

The protein belongs to the NTE family.

The protein resides in the endoplasmic reticulum membrane. The enzyme catalyses a 1-acyl-sn-glycero-3-phosphocholine + H2O = sn-glycerol 3-phosphocholine + a fatty acid + H(+). Inhibited by organophosphorus esters. Intracellular phospholipase B that catalyzes the double deacylation of phosphatidylcholine (PC) to glycerophosphocholine (GroPCho). Plays an important role in membrane lipid homeostasis. Responsible for the rapid PC turnover in response to inositol, elevated temperatures, or when choline is present in the growth medium. The protein is Lysophospholipase NTE1 (NTE1) of Scheffersomyces stipitis (strain ATCC 58785 / CBS 6054 / NBRC 10063 / NRRL Y-11545) (Yeast).